The following is a 539-amino-acid chain: O-phosphoserine--tRNA(Cys) ligase (539 aa).

Substrate is bound by residues 188 to 190 (HMT), 233 to 235 (SAS), 275 to 276 (YY), and Asn-327.

This sequence belongs to the class-II aminoacyl-tRNA synthetase family. O-phosphoseryl-tRNA(Cys) synthetase subfamily. Homotetramer. Interacts with SepCysS.

The enzyme catalyses tRNA(Cys) + O-phospho-L-serine + ATP = O-phospho-L-seryl-tRNA(Cys) + AMP + diphosphate. In terms of biological role, catalyzes the attachment of O-phosphoserine (Sep) to tRNA(Cys). This is O-phosphoserine--tRNA(Cys) ligase from Methanococcoides burtonii (strain DSM 6242 / NBRC 107633 / OCM 468 / ACE-M).